The primary structure comprises 1788 residues: Genome polyprotein (1788 aa).

The interaction with host MAP1LC3A/LC3 stretch occupies residues 1–184; the sequence is MMMASKDVVA…LCPLPPIDLR (184 aa). Positions 58–68 are enriched in low complexity; that stretch reads GRTTPEPTGTA. The segment at 58-86 is disordered; it reads GRTTPEPTGTAGPPPKQQRDRPPRTQEEV. Basic and acidic residues predominate over residues 74–84; sequence QQRDRPPRTQE. Positions 185 to 399 are interaction with NTPase; it reads NMEPASEPTI…ASLLPDFHLQ (215 aa). Residues 302–399 are interaction with NS4; sequence HPTQSWSQQT…ASLLPDFHLQ (98 aa). Host ER membrane association regions lie at residues 319–350 and 361–399; these read KLEL…KPLN and TFMG…FHLQ. Residues 400-575 form an interaction with NS1-2 and NS4 and homooligomerization region; that stretch reads GPEDLARDLV…GKTKAAEHLA (176 aa). Residues 533-698 form the SF3 helicase domain; that stretch reads RISMARSALA…EQIRRVSPGD (166 aa). 561–568 is a binding site for ATP; the sequence is GPPGIGKT. Residues 652–757 are important for mitochondrion targeting; sequence AIVITTNAPG…AVALTMERQD (106 aa). The interval 827–833 is functions as endoplasmic reticulum export signal; the sequence is YSLESDG. The host membrane association stretch occupies residues 866–911; it reads RAVAYASCIQSAITSILQIAGSALVVNRAVKRMFGTRTATLSLEGP. Positions 948–979 are disordered; the sequence is EEVAHTEIPSATMEGKNKGKNKKGRGRRNNYN. Residues 965-975 are compositionally biased toward basic residues; that stretch reads KGKNKKGRGRR. The acidic stretch occupies residues 988 to 993; it reads DEEYEE. Tyr-991 is modified (O-(5'-phospho-RNA)-tyrosine). An interaction with host EIF4G region spans residues 1083–1099; the sequence is WADDEREVDYNEKISFE. The region spanning 1100–1280 is the Peptidase C37 domain; sequence APPTLWSRVT…QASEGETTLE (181 aa). Residues His-1129, Glu-1153, and Cys-1238 each act as for 3CLpro activity in the active site. The 122-residue stretch at 1515–1636 folds into the RdRp catalytic domain; it reads KYHFDADYTA…STDIEFDPAK (122 aa). Positions 1519, 1521, 1623, and 1624 each coordinate Mg(2+).

In terms of assembly, homodimer. Homooligomer. Interacts with NTPase; this interaction increases the proapoptotic activity of the NTPase and is crucial for the formation of the viral replication complex. Interacts with NS4; this interaction is crucial for the formation of the viral replication complex. Interacts (via N-terminus) with host VAPA. Interacts with host MAP1LC3A/LC3; this interaction does not seem to be linked to host autophagy, but rather plays a role in the formation of viral factories. Homooligomer. Interacts with NS1-2; this interaction increases the proapoptotic activity of the NTPase and is crucial for the formation of the viral replication complex. Interacts with NS4; this interaction increases the proapoptotic activity of the NTPase. As to quaternary structure, homodimer. Monomer; in solution. In terms of assembly, interacts with NTPase; this interaction increases the proapoptotic activity of the NTPase. Interacts with NS1-2; this interaction is crucial for the formation of the viral replication complex. Monomer. Interacts with the RNA-directed RNA polymerase; this interaction induces the multimerization of the RdRp and enhances its activity. Interacts with host IEF4G1; this interaction plays a role in translation of viral proteins. As to quaternary structure, homohexamer; also forms fibrous hexameric oligomer. Interacts with the viral genome-linked protein; this interaction induces the multimerization of the RdRp and enhances its activity. Requires Mg(2+) as cofactor. Mn(2+) is required as a cofactor. In terms of processing, specific enzymatic cleavages in vivo yield mature proteins. 3CLpro is first autocatalytically cleaved, then processes the whole polyprotein. NS1/2-3 and NS3-4 sites are cleaved rapidly and NS4-5, NS5-6, and NS6-7 sites are processed subsequently and less efficiently. VPg is uridylylated by the polymerase and is covalently attached to the 5'-end of the polyadenylated genomic and subgenomic RNAs. This uridylylated form acts as a nucleotide-peptide primer for the polymerase.

It is found in the host Golgi apparatus membrane. It localises to the host endoplasmic reticulum membrane. It carries out the reaction a ribonucleoside 5'-triphosphate + H2O = a ribonucleoside 5'-diphosphate + phosphate + H(+). The catalysed reaction is Endopeptidase with a preference for cleavage when the P1 position is occupied by Glu-|-Xaa and the P1' position is occupied by Gly-|-Yaa.. It catalyses the reaction RNA(n) + a ribonucleoside 5'-triphosphate = RNA(n+1) + diphosphate. In terms of biological role, induces the proliferation of the host smooth ER membranes forming long tubular structures. These remodeled membranes probably form the viral factories that contain the replication complex. May play a role in viral replication by interacting with host VAPA, a vesicle-associated membrane protein that plays a role in SNARE-mediated vesicle fusion. This interaction may target replication complex to intracellular membranes. Its function is as follows. Displays NTPase activity, but no helicase activity. Induces the formation of convoluted membranes derived from the host ER. These remodeled membranes probably form the viral factories that contain the replication complex. Initiates host cell death by targeting the mitochondrial outer membrane, leading to the permeabilization of mitochondria, programmed host cell death and viral egress. Probably plays a role in preventing the assembly of host stress granules. Functionally, probable key protein responsible for the formation of membrane alterations by the virus. Induces the formation of convoluted membranes derived from the host ER. These remodeled membranes probably form the viral factories that contain the replication complex. May play a role in targeting replication complex to intracellular membranes. Viral genome-linked protein is covalently linked to the 5'-end of the positive-strand, negative-strand genomic RNAs and subgenomic RNA. Acts as a genome-linked replication primer. May recruit ribosome to viral RNA thereby promoting viral proteins translation. Interacts with host translation initiation complex to allow the translation of viral proteins. Induces the formation of aggregates of RNA-directed RNA polymerase in the presence of RNA. Through its interaction with the viral RNA-directed RNA polymerase, plays a crucial role in enhancing the polymerase activity. In terms of biological role, processes the polyprotein. 3CLpro-RdRp is first released by autocleavage, then all other proteins are cleaved. May cleave polyadenylate-binding protein thereby inhibiting cellular translation. Its function is as follows. Replicates genomic and antigenomic RNA by recognizing replications specific signals. Also transcribes a subgenomic mRNA by initiating RNA synthesis internally on antigenomic RNA. This sgRNA codes for structural proteins. Catalyzes the covalent attachment VPg with viral RNAs. The protein is Genome polyprotein of Southampton virus (strain GI/Human/United Kingdom/Southampton/1991) (SHV).